Reading from the N-terminus, the 275-residue chain is Polyamine aminopropyltransferase (275 aa).

The region spanning 2 to 235 is the PABS domain; the sequence is ELWFTEKQTK…GLWTFTIGSK (234 aa). Gln31 is a binding site for S-methyl-5'-thioadenosine. Residues His62 and Asp86 each contribute to the spermidine site. Residues Glu106 and 137 to 138 each bind S-methyl-5'-thioadenosine; that span reads DG. The active-site Proton acceptor is Asp155. 155 to 158 serves as a coordination point for spermidine; that stretch reads DSTE. Pro162 is an S-methyl-5'-thioadenosine binding site.

This sequence belongs to the spermidine/spermine synthase family. Homodimer or homotetramer.

It localises to the cytoplasm. It catalyses the reaction S-adenosyl 3-(methylsulfanyl)propylamine + putrescine = S-methyl-5'-thioadenosine + spermidine + H(+). It functions in the pathway amine and polyamine biosynthesis; spermidine biosynthesis; spermidine from putrescine: step 1/1. Its function is as follows. Catalyzes the irreversible transfer of a propylamine group from the amino donor S-adenosylmethioninamine (decarboxy-AdoMet) to putrescine (1,4-diaminobutane) to yield spermidine. This Bacillus cytotoxicus (strain DSM 22905 / CIP 110041 / 391-98 / NVH 391-98) protein is Polyamine aminopropyltransferase.